A 479-amino-acid polypeptide reads, in one-letter code: Anaerobic nitric oxide reductase flavorubredoxin (479 aa).

A zinc metallo-hydrolase region spans residues 30 to 210 (LRGSSYNSYL…PFSRLVTPKI (181 aa)). Residues H79, E81, D83, H147, D166, and H227 each contribute to the Fe cation site. The Flavodoxin-like domain occupies 254–393 (ITIFYDTMSN…LCRQHGRDIA (140 aa)). Residues 260 to 264 (TMSNN) and 342 to 369 (AFGS…EMSL) each bind FMN. Residues 423–474 (GPKMQCSVCQWIYDPALGEPLQDVAPGTPWSDVPDNFLCPECSLGKDVFDVL) form the Rubredoxin-like domain. Residues C428, C431, C461, and C464 each coordinate Fe cation.

The protein in the N-terminal section; belongs to the zinc metallo-hydrolase group 3 family. In terms of assembly, homotetramer. Requires Fe cation as cofactor. The cofactor is FMN.

The protein localises to the cytoplasm. Its pathway is nitrogen metabolism; nitric oxide reduction. Its function is as follows. Anaerobic nitric oxide reductase; uses NADH to detoxify nitric oxide (NO), protecting several 4Fe-4S NO-sensitive enzymes. Has at least 2 reductase partners, only one of which (NorW, flavorubredoxin reductase) has been identified. NO probably binds to the di-iron center; electrons enter from the NorW at rubredoxin and are transferred sequentially to the FMN center and the di-iron center. Also able to function as an aerobic oxygen reductase. The polypeptide is Anaerobic nitric oxide reductase flavorubredoxin (Salmonella paratyphi B (strain ATCC BAA-1250 / SPB7)).